The following is a 303-amino-acid chain: Protoheme IX farnesyltransferase (303 aa).

Helical transmembrane passes span 25–45 (MGLV…AVVM), 54–74 (IPQI…ACAL), 104–124 (LLLL…LLNI), 125–145 (PSGV…SIWS), 151–171 (WNTV…WVAI), 179–199 (AIAL…ALAI), 227–247 (FIWL…GVVF), 248–268 (VVLA…TFKK), and 280–300 (FIYS…VSLL).

Belongs to the UbiA prenyltransferase family. Protoheme IX farnesyltransferase subfamily. Interacts with CtaA.

The protein localises to the cell membrane. It catalyses the reaction heme b + (2E,6E)-farnesyl diphosphate + H2O = Fe(II)-heme o + diphosphate. Its pathway is porphyrin-containing compound metabolism; heme O biosynthesis; heme O from protoheme: step 1/1. Its function is as follows. Converts heme B (protoheme IX) to heme O by substitution of the vinyl group on carbon 2 of heme B porphyrin ring with a hydroxyethyl farnesyl side group. This chain is Protoheme IX farnesyltransferase, found in Staphylococcus aureus (strain bovine RF122 / ET3-1).